The sequence spans 198 residues: 3-isopropylmalate dehydratase small subunit (198 aa).

This sequence belongs to the LeuD family. LeuD type 1 subfamily. In terms of assembly, heterodimer of LeuC and LeuD.

The enzyme catalyses (2R,3S)-3-isopropylmalate = (2S)-2-isopropylmalate. Its pathway is amino-acid biosynthesis; L-leucine biosynthesis; L-leucine from 3-methyl-2-oxobutanoate: step 2/4. Catalyzes the isomerization between 2-isopropylmalate and 3-isopropylmalate, via the formation of 2-isopropylmaleate. The protein is 3-isopropylmalate dehydratase small subunit of Mycobacterium avium (strain 104).